A 162-amino-acid chain; its full sequence is 6,7-dimethyl-8-ribityllumazine synthase (162 aa).

Residues Tyr27, 58 to 60, and 87 to 89 contribute to the 5-amino-6-(D-ribitylamino)uracil site; these read ALE and CVI. 92–93 serves as a coordination point for (2S)-2-hydroxy-3-oxobutyl phosphate; that stretch reads ET. His95 acts as the Proton donor in catalysis. Asn120 contacts 5-amino-6-(D-ribitylamino)uracil. Arg134 contributes to the (2S)-2-hydroxy-3-oxobutyl phosphate binding site.

The protein belongs to the DMRL synthase family.

The enzyme catalyses (2S)-2-hydroxy-3-oxobutyl phosphate + 5-amino-6-(D-ribitylamino)uracil = 6,7-dimethyl-8-(1-D-ribityl)lumazine + phosphate + 2 H2O + H(+). It functions in the pathway cofactor biosynthesis; riboflavin biosynthesis; riboflavin from 2-hydroxy-3-oxobutyl phosphate and 5-amino-6-(D-ribitylamino)uracil: step 1/2. Its function is as follows. Catalyzes the formation of 6,7-dimethyl-8-ribityllumazine by condensation of 5-amino-6-(D-ribitylamino)uracil with 3,4-dihydroxy-2-butanone 4-phosphate. This is the penultimate step in the biosynthesis of riboflavin. The sequence is that of 6,7-dimethyl-8-ribityllumazine synthase from Azorhizobium caulinodans (strain ATCC 43989 / DSM 5975 / JCM 20966 / LMG 6465 / NBRC 14845 / NCIMB 13405 / ORS 571).